The sequence spans 180 residues: NADH-quinone oxidoreductase subunit I (180 aa).

2 4Fe-4S ferredoxin-type domains span residues 48 to 80 (IVLT…LQKA) and 90 to 119 (EFFR…LTPD). [4Fe-4S] cluster is bound by residues Cys60, Cys63, Cys66, Cys70, Cys99, Cys102, Cys105, and Cys109.

The protein belongs to the complex I 23 kDa subunit family. In terms of assembly, NDH-1 is composed of 13 different subunits. Subunits NuoA, H, J, K, L, M, N constitute the membrane sector of the complex. The cofactor is [4Fe-4S] cluster.

The protein localises to the cell inner membrane. The catalysed reaction is a quinone + NADH + 5 H(+)(in) = a quinol + NAD(+) + 4 H(+)(out). Functionally, NDH-1 shuttles electrons from NADH, via FMN and iron-sulfur (Fe-S) centers, to quinones in the respiratory chain. The immediate electron acceptor for the enzyme in this species is believed to be ubiquinone. Couples the redox reaction to proton translocation (for every two electrons transferred, four hydrogen ions are translocated across the cytoplasmic membrane), and thus conserves the redox energy in a proton gradient. This chain is NADH-quinone oxidoreductase subunit I, found in Edwardsiella ictaluri (strain 93-146).